Here is a 224-residue protein sequence, read N- to C-terminus: Probable octanoyltransferase (224 aa).

A BPL/LPL catalytic domain is found at 28–199 (GLTGDIALVT…KLALELGLTP (172 aa)). Substrate contacts are provided by residues 66 to 73 (RGGDATYH), 130 to 132 (SIG), and 143 to 145 (GVA). Cysteine 161 serves as the catalytic Acyl-thioester intermediate.

Belongs to the LipB family.

It is found in the cytoplasm. The enzyme catalyses octanoyl-[ACP] + L-lysyl-[protein] = N(6)-octanoyl-L-lysyl-[protein] + holo-[ACP] + H(+). It participates in protein modification; protein lipoylation via endogenous pathway; protein N(6)-(lipoyl)lysine from octanoyl-[acyl-carrier-protein]: step 1/2. Functionally, catalyzes the transfer of endogenously produced octanoic acid from octanoyl-acyl-carrier-protein onto the lipoyl domains of lipoate-dependent enzymes. Lipoyl-ACP can also act as a substrate although octanoyl-ACP is likely to be the physiological substrate. The polypeptide is Probable octanoyltransferase (Pyrobaculum aerophilum (strain ATCC 51768 / DSM 7523 / JCM 9630 / CIP 104966 / NBRC 100827 / IM2)).